The primary structure comprises 222 residues: Embryonic stem cell-related gene protein (222 aa).

In terms of tissue distribution, expressed only in fetal ovary and in undifferentiated ES cells.

The protein resides in the nucleus. This is Embryonic stem cell-related gene protein (ESRG) from Homo sapiens (Human).